Here is a 152-residue protein sequence, read N- to C-terminus: Methylglyoxal synthase (152 aa).

The 147-residue stretch at 6 to 152 (RKISARKSIA…YDGYLAERLA (147 aa)) folds into the MGS-like domain. Residues His-19, Lys-23, 45–48 (TGTT), and 65–66 (SG) contribute to the substrate site. Asp-71 serves as the catalytic Proton donor/acceptor. His-98 contributes to the substrate binding site.

Belongs to the methylglyoxal synthase family.

The enzyme catalyses dihydroxyacetone phosphate = methylglyoxal + phosphate. Its function is as follows. Catalyzes the formation of methylglyoxal from dihydroxyacetone phosphate. The sequence is that of Methylglyoxal synthase from Actinobacillus pleuropneumoniae serotype 3 (strain JL03).